We begin with the raw amino-acid sequence, 236 residues long: MAETKLQLFVKASEDGESVGHCPSCQRLFMVLLLKGVPFTLTTVDTRRSPDVLKDFAPGSQLPILLYDSDAKTDTLQIEDFLEETLGPPDFPSLAPRYRESNTAGNDVFHKFSAFIKNPVPAQDEALYQQLLRALARLDSYLRAPLEHELAGEPQLRESRRRFLDGDRLTLADCSLLPKLHIVDTVCAHFRQAPIPAELRGVRRYLDSAMQEKEFKYTCPHSAEILAAYRPAVHPR.

Residues 1 to 88 (MAETKLQLFV…EDFLEETLGP (88 aa)) are required for insertion into the membrane. The 79-residue stretch at 12-90 (ASEDGESVGH…FLEETLGPPD (79 aa)) folds into the GST N-terminal domain. The G-site motif lies at 22 to 25 (CPSC). Cys22 and Cys25 are joined by a disulfide. Residues 24 to 44 (SCQRLFMVLLLKGVPFTLTTV) traverse the membrane as a helical segment. Phosphoserine occurs at positions 49 and 159. One can recognise a GST C-terminal domain in the interval 68-235 (DSDAKTDTLQ…LAAYRPAVHP (168 aa)).

It belongs to the chloride channel CLIC family. As to quaternary structure, associated with the C-terminal of MAPK15. Detected in placenta (at protein level). Widely expressed. High expression is found in placenta followed by lung and heart. Low expression in skeletal muscle, kidney and pancreas.

The protein localises to the nucleus. The protein resides in the membrane. Its subcellular location is the cell membrane. It is found in the cytoplasm. It localises to the secreted. The protein localises to the extracellular space. The protein resides in the extracellular matrix. The catalysed reaction is chloride(in) = chloride(out). Inhibited by rapamycin, amphotericin B and IAA-94. In the soluble state, catalyzes glutaredoxin-like thiol disulfide exchange reactions with reduced glutathione as electron donor. Reduced in a glutathione-dependent way and secreted into the extracellular matrix where it activates TGM2 and promotes blood vessel growth during tissue remodeling as occurs in tumorigenesis. Can reduce specific cysteines in TGM2 and regulate cofactor binding. Can insert into membranes and form outwardly rectifying chloride ion channels. May participate in cellular growth control. In Homo sapiens (Human), this protein is Chloride intracellular channel protein 3.